A 493-amino-acid chain; its full sequence is Xylulose kinase (493 aa).

84 to 85 (QH) contributes to the substrate binding site. Asp-247 (proton acceptor) is an active-site residue.

Belongs to the FGGY kinase family.

It carries out the reaction D-xylulose + ATP = D-xylulose 5-phosphate + ADP + H(+). In terms of biological role, catalyzes the phosphorylation of D-xylulose to D-xylulose 5-phosphate. The sequence is that of Xylulose kinase from Haemophilus influenzae (strain ATCC 51907 / DSM 11121 / KW20 / Rd).